The sequence spans 640 residues: Chaperone protein DnaK (640 aa).

T196 is subject to Phosphothreonine; by autocatalysis. Disordered stretches follow at residues 510–530 (NDAKAHAEEDAKRKEEVETKN) and 598–640 (AADA…DKDK).

It belongs to the heat shock protein 70 family.

Its function is as follows. Acts as a chaperone. The polypeptide is Chaperone protein DnaK (Prosthecochloris aestuarii (strain DSM 271 / SK 413)).